The chain runs to 366 residues: MIVTETIIRFENVTKQFDNDPPVLDNVSFEIEKGKFYTLLGPSGCGKTTILRLIAGFLEASEGQIYLGDKVINQIPANKRPVNTVFQDYALFPHLNVYENVAFGLRIKKLKKDAIDEKVKEALRFVNLKGYEKREISEMSGGQRQRVAIARAIVNEPEVILLDEPLSALDLKLRTEMQYELRDLQKRLGITFIFVTHDQEEALAMSDEIFVLNKGEIQQSGTPIDIYDEPINKFVADFIGESNIVNGKMIQDFEVEFVERRFECVDQGFRPNEVVEVVIRPEDLEITSAEKGQLQVTVDWMLFRGVHYEVGCIDTDGNEWLVHTTRKVRVGDKIGLAFEPEAIHVMRLGETEEEFDKRLDSYDEVQ.

Positions 8-239 (IRFENVTKQF…PINKFVADFI (232 aa)) constitute an ABC transporter domain. 41-48 (GPSGCGKT) serves as a coordination point for ATP.

This sequence belongs to the ABC transporter superfamily. Spermidine/putrescine importer (TC 3.A.1.11.1) family. In terms of assembly, the complex is composed of two ATP-binding proteins (PotA), two transmembrane proteins (PotB and PotC) and a solute-binding protein (PotD).

The protein resides in the cell membrane. It carries out the reaction ATP + H2O + polyamine-[polyamine-binding protein]Side 1 = ADP + phosphate + polyamineSide 2 + [polyamine-binding protein]Side 1.. Part of the ABC transporter complex PotABCD involved in spermidine/putrescine import. Responsible for energy coupling to the transport system. The chain is Spermidine/putrescine import ATP-binding protein PotA from Listeria monocytogenes serotype 4b (strain F2365).